Reading from the N-terminus, the 326-residue chain is Phospho-N-acetylmuramoyl-pentapeptide-transferase (326 aa).

A run of 9 helical transmembrane segments spans residues 3 to 23 (ISIS…PAFI), 51 to 71 (TMGG…FALF), 79 to 99 (VGMI…DDFL), 115 to 135 (LALQ…GGDI), 138 to 158 (VFGY…FWLV), 169 to 189 (GVDG…GVIA), 195 to 215 (MDIL…FIFN), 221 to 243 (VFMG…MALH), and 306 to 326 (FFFW…LYLM).

This sequence belongs to the glycosyltransferase 4 family. MraY subfamily. It depends on Mg(2+) as a cofactor.

It is found in the cell membrane. It carries out the reaction UDP-N-acetyl-alpha-D-muramoyl-L-alanyl-gamma-D-glutamyl-L-lysyl-D-alanyl-D-alanine + di-trans,octa-cis-undecaprenyl phosphate = Mur2Ac(oyl-L-Ala-gamma-D-Glu-L-Lys-D-Ala-D-Ala)-di-trans,octa-cis-undecaprenyl diphosphate + UMP. It functions in the pathway cell wall biogenesis; peptidoglycan biosynthesis. Its function is as follows. Catalyzes the initial step of the lipid cycle reactions in the biosynthesis of the cell wall peptidoglycan: transfers peptidoglycan precursor phospho-MurNAc-pentapeptide from UDP-MurNAc-pentapeptide onto the lipid carrier undecaprenyl phosphate, yielding undecaprenyl-pyrophosphoryl-MurNAc-pentapeptide, known as lipid I. In Streptococcus pneumoniae serotype 19F (strain G54), this protein is Phospho-N-acetylmuramoyl-pentapeptide-transferase.